Here is a 1876-residue protein sequence, read N- to C-terminus: Phenolphthiocerol/phthiocerol polyketide synthase subunit A (1876 aa).

In terms of domain architecture, Carrier 1 spans 9 to 83; that stretch reads ADLRHWLIDY…ALAAYLAAPE (75 aa). The residue at position 43 (Ser43) is an O-(pantetheine 4'-phosphoryl)serine. A Ketosynthase family 3 (KS3) domain is found at 101 to 526; that stretch reads DEPIAVVGMG…GTNAHVVIEQ (426 aa). Active-site for beta-ketoacyl synthase activity residues include Cys273, His408, and His448. Residues 626–950 form an acyltransferase region; the sequence is SPGPGTVFVY…NLNKAHTIHP (325 aa). Ser720 acts as the For malonyltransferase activity in catalysis. The N-terminal hotdog fold stretch occupies residues 997–1112; it reads HTTVATVSAS…AQLSSSPSDS (116 aa). The PKS/mFAS DH domain occupies 997-1267; that stretch reads HTTVATVSAS…YRALDFGLDV (271 aa). Catalysis depends on His1027, which acts as the Proton acceptor; for dehydratase activity. Residues 1102-1130 form a disordered region; the sequence is TAQLSSSPSDSASSLNEHHRANGQPPERA. Residues 1106-1115 show a composition bias toward low complexity; sequence SSSPSDSASS. The interval 1130–1267 is C-terminal hotdog fold; sequence AHRDLIPDLA…YRALDFGLDV (138 aa). Residue Asp1186 is the Proton donor; for dehydratase activity of the active site. Position 1491-1551 (1491-1551) interacts with NADP(+); sequence AAYLITGGLG…RRRIDAIRAL (61 aa). Positions 1491–1728 are beta-ketoacyl reductase; that stretch reads AAYLITGGLG…DGYDVAQAVV (238 aa). In terms of domain architecture, Carrier 2 spans 1759 to 1836; it reads EVRSELEQGL…SLASYLAKRV (78 aa). Ser1796 carries the O-(pantetheine 4'-phosphoryl)serine modification.

NADP(+) serves as cofactor. The cofactor is pantetheine 4'-phosphate.

It carries out the reaction icosanoyl-[(phenol)carboxyphthiodiolenone synthase] + 2 (S)-methylmalonyl-CoA + 3 malonyl-CoA + 5 NADPH + 10 H(+) = C32-carboxyphthiodiolenone-[(phenol)carboxyphthiodiolenone synthase] + 5 CO2 + 5 NADP(+) + 5 CoA + 2 H2O. The enzyme catalyses docosanoyl-[(phenol)carboxyphthiodiolenone synthase] + 2 (S)-methylmalonyl-CoA + 3 malonyl-CoA + 5 NADPH + 10 H(+) = C34-carboxyphthiodiolenone-[(phenol)carboxyphthiodiolenone synthase] + 5 CO2 + 5 NADP(+) + 5 CoA + 2 H2O. The catalysed reaction is 17-(4-hydroxyphenyl)heptadecanoyl-[(phenol)carboxyphthiodiolenone synthase] + 2 (S)-methylmalonyl-CoA + 3 malonyl-CoA + 5 NADPH + 10 H(+) = C35-(phenol)carboxyphthiodiolenone-[(phenol)carboxyphthiodiolenone synthase] + 5 CO2 + 5 NADP(+) + 5 CoA + 2 H2O. It catalyses the reaction 19-(4-hydroxyphenyl)nonadecanoyl-[(phenol)carboxyphthiodiolenone synthase] + 2 (S)-methylmalonyl-CoA + 3 malonyl-CoA + 5 NADPH + 10 H(+) = C37-(phenol)carboxyphthiodiolenone-[(phenol)carboxyphthiodiolenone synthase] + 5 CO2 + 5 NADP(+) + 5 CoA + 2 H2O. Its pathway is lipid metabolism; fatty acid biosynthesis. Its function is as follows. Part of the PpsABCDE complex involved in the biosynthesis of the lipid core common to phthiocerols and phenolphthiocerols by successive additions of malonyl-CoA or methylmalonyl-CoA extender units. PpsA can accept as substrate the activated forms of either icosanoyl (C20), docosanoyl (C22) or lignoceroyl (C24) groups from FadD26, or a (4-hydroxyphenyl)-C17 or (4-hydroxyphenyl)-C19 fatty acyl from FadD29. PpsA initiates the biosynthesis and extends its substrate using a malonyl-CoA extender unit. The PpsB and PpsC proteins add the second and third malonyl-CoA extender units. PpsD adds an (R)-methylmalonyl unit and PpsE adds a second (R)-methylmalonyl unit. The incorporation of the methylmalonyl units results in formation of two branched methyl groups in the elongated product. The polypeptide is Phenolphthiocerol/phthiocerol polyketide synthase subunit A (ppsA) (Mycobacterium tuberculosis (strain CDC 1551 / Oshkosh)).